A 209-amino-acid chain; its full sequence is Large ribosomal subunit protein uL3 (209 aa).

Position 150 is an N5-methylglutamine (glutamine 150).

It belongs to the universal ribosomal protein uL3 family. In terms of assembly, part of the 50S ribosomal subunit. Forms a cluster with proteins L14 and L19. Post-translationally, methylated by PrmB.

Functionally, one of the primary rRNA binding proteins, it binds directly near the 3'-end of the 23S rRNA, where it nucleates assembly of the 50S subunit. This is Large ribosomal subunit protein uL3 from Salmonella paratyphi C (strain RKS4594).